The chain runs to 104 residues: Large ribosomal subunit protein uL24 (104 aa).

The protein belongs to the universal ribosomal protein uL24 family. Part of the 50S ribosomal subunit.

In terms of biological role, one of two assembly initiator proteins, it binds directly to the 5'-end of the 23S rRNA, where it nucleates assembly of the 50S subunit. Its function is as follows. One of the proteins that surrounds the polypeptide exit tunnel on the outside of the subunit. This chain is Large ribosomal subunit protein uL24, found in Pectobacterium carotovorum subsp. carotovorum (strain PC1).